The chain runs to 495 residues: Chromosomal replication initiator protein DnaA (495 aa).

The interval 1-83 (MSVALWQQCL…KVQLTVGSRR (83 aa)) is domain I, interacts with DnaA modulators. Residues 83 to 158 (RNVAMSSPRD…QVEGSLKHQS (76 aa)) form a domain II region. Positions 86-127 (AMSSPRDLGAPVSATTMNASRPTEAPAVHAAPRAKGDYADEQ) are disordered. The segment at 159 to 375 (GLNPNFTFET…GALKKVIADS (217 aa)) is domain III, AAA+ region. Residues Gly203, Gly205, Lys206, and Thr207 each coordinate ATP. Residues 376-495 (HFMGKPITQD…YKNLLRLLTS (120 aa)) are domain IV, binds dsDNA.

This sequence belongs to the DnaA family. Oligomerizes as a right-handed, spiral filament on DNA at oriC.

It localises to the cytoplasm. Plays an essential role in the initiation and regulation of chromosomal replication. ATP-DnaA binds to the origin of replication (oriC) to initiate formation of the DNA replication initiation complex once per cell cycle. Binds the DnaA box (a 9 base pair repeat at the origin) and separates the double-stranded (ds)DNA. Forms a right-handed helical filament on oriC DNA; dsDNA binds to the exterior of the filament while single-stranded (ss)DNA is stabiized in the filament's interior. The ATP-DnaA-oriC complex binds and stabilizes one strand of the AT-rich DNA unwinding element (DUE), permitting loading of DNA polymerase. After initiation quickly degrades to an ADP-DnaA complex that is not apt for DNA replication. Binds acidic phospholipids. In Chromohalobacter salexigens (strain ATCC BAA-138 / DSM 3043 / CIP 106854 / NCIMB 13768 / 1H11), this protein is Chromosomal replication initiator protein DnaA.